Consider the following 93-residue polypeptide: Protein FptB (93 aa).

The signal sequence occupies residues methionine 1–threonine 25. A run of 2 helical transmembrane segments spans residues leucine 44–leucine 64 and phenylalanine 71–glycine 91.

Its subcellular location is the cell membrane. Functionally, may play some role in transport of Fe(3+)-pyochelin. This chain is Protein FptB (fptB), found in Pseudomonas aeruginosa (strain ATCC 15692 / DSM 22644 / CIP 104116 / JCM 14847 / LMG 12228 / 1C / PRS 101 / PAO1).